The sequence spans 242 residues: Orotidine 5'-phosphate decarboxylase (242 aa).

Substrate contacts are provided by residues Asp16, Lys37, 64–73 (DLKFHDIPNT), Thr128, Arg190, Gln199, Gly219, and Arg220. The Proton donor role is filled by Lys66.

The protein belongs to the OMP decarboxylase family. Type 1 subfamily. Homodimer.

The enzyme catalyses orotidine 5'-phosphate + H(+) = UMP + CO2. Its pathway is pyrimidine metabolism; UMP biosynthesis via de novo pathway; UMP from orotate: step 2/2. Its function is as follows. Catalyzes the decarboxylation of orotidine 5'-monophosphate (OMP) to uridine 5'-monophosphate (UMP). This Prochlorococcus marinus (strain MIT 9215) protein is Orotidine 5'-phosphate decarboxylase.